The chain runs to 235 residues: Protein fmp52-1, mitochondrial (235 aa).

The N-terminal 36 residues, 1–36 (MANTALIGCTGMVGSFILNNLLAHPSVARVDTISRR), are a transit peptide targeting the mitochondrion.

This sequence belongs to the FMP52 family.

The protein resides in the mitochondrion outer membrane. This chain is Protein fmp52-1, mitochondrial (fmp521), found in Aspergillus oryzae (strain ATCC 42149 / RIB 40) (Yellow koji mold).